The following is a 92-amino-acid chain: Small ribosomal subunit protein uS19 (92 aa).

Belongs to the universal ribosomal protein uS19 family.

Protein S19 forms a complex with S13 that binds strongly to the 16S ribosomal RNA. The sequence is that of Small ribosomal subunit protein uS19 from Listeria innocua serovar 6a (strain ATCC BAA-680 / CLIP 11262).